We begin with the raw amino-acid sequence, 117 residues long: DNA-directed RNA polymerase II subunit RPB11 (117 aa).

This sequence belongs to the archaeal Rpo11/eukaryotic RPB11/RPC19 RNA polymerase subunit family. Component of the RNA polymerase II (Pol II) complex consisting of 12 subunits.

It is found in the nucleus. Functionally, DNA-dependent RNA polymerase catalyzes the transcription of DNA into RNA using the four ribonucleoside triphosphates as substrates. Component of RNA polymerase II which synthesizes mRNA precursors and many functional non-coding RNAs. Pol II is the central component of the basal RNA polymerase II transcription machinery. It is composed of mobile elements that move relative to each other. RPB11 is part of the core element with the central large cleft. The polypeptide is DNA-directed RNA polymerase II subunit RPB11 (Drosophila melanogaster (Fruit fly)).